A 138-amino-acid chain; its full sequence is Cellular retinoic acid-binding protein 2 (138 aa).

Residues 21–31 carry the Nuclear localization signal motif; the sequence is KVLGVNVMLRK. Residue Lys102 forms a Glycyl lysine isopeptide (Lys-Gly) (interchain with G-Cter in SUMO) linkage. 133–135 provides a ligand contact to all-trans-retinoate; it reads RVY.

The protein belongs to the calycin superfamily. Fatty-acid binding protein (FABP) family. In terms of assembly, interacts with importin alpha, RXR and RARA. Sumoylated in response to retinoic acid binding, sumoylation is critical for dissociation from ER and subsequent nuclear translocation.

Its subcellular location is the cytoplasm. It localises to the endoplasmic reticulum. The protein resides in the nucleus. Functionally, transports retinoic acid to the nucleus. Regulates the access of retinoic acid to the nuclear retinoic acid receptors. In Bos taurus (Bovine), this protein is Cellular retinoic acid-binding protein 2 (CRABP2).